Reading from the N-terminus, the 156-residue chain is SsrA-binding protein (156 aa).

Belongs to the SmpB family.

It is found in the cytoplasm. Functionally, required for rescue of stalled ribosomes mediated by trans-translation. Binds to transfer-messenger RNA (tmRNA), required for stable association of tmRNA with ribosomes. tmRNA and SmpB together mimic tRNA shape, replacing the anticodon stem-loop with SmpB. tmRNA is encoded by the ssrA gene; the 2 termini fold to resemble tRNA(Ala) and it encodes a 'tag peptide', a short internal open reading frame. During trans-translation Ala-aminoacylated tmRNA acts like a tRNA, entering the A-site of stalled ribosomes, displacing the stalled mRNA. The ribosome then switches to translate the ORF on the tmRNA; the nascent peptide is terminated with the 'tag peptide' encoded by the tmRNA and targeted for degradation. The ribosome is freed to recommence translation, which seems to be the essential function of trans-translation. The chain is SsrA-binding protein from Clostridium perfringens (strain 13 / Type A).